The sequence spans 325 residues: Ribose-phosphate pyrophosphokinase (325 aa).

ATP contacts are provided by residues 45-47 and 104-105; these read NGE and RQ. Residues His-138 and Asp-178 each contribute to the Mg(2+) site. Lys-202 is an active-site residue. D-ribose 5-phosphate is bound by residues Arg-204, Asp-230, and 234–238; that span reads DTGGT.

It belongs to the ribose-phosphate pyrophosphokinase family. Class I subfamily. In terms of assembly, homohexamer. It depends on Mg(2+) as a cofactor.

It localises to the cytoplasm. It carries out the reaction D-ribose 5-phosphate + ATP = 5-phospho-alpha-D-ribose 1-diphosphate + AMP + H(+). Its pathway is metabolic intermediate biosynthesis; 5-phospho-alpha-D-ribose 1-diphosphate biosynthesis; 5-phospho-alpha-D-ribose 1-diphosphate from D-ribose 5-phosphate (route I): step 1/1. Involved in the biosynthesis of the central metabolite phospho-alpha-D-ribosyl-1-pyrophosphate (PRPP) via the transfer of pyrophosphoryl group from ATP to 1-hydroxyl of ribose-5-phosphate (Rib-5-P). This chain is Ribose-phosphate pyrophosphokinase, found in Corynebacterium efficiens (strain DSM 44549 / YS-314 / AJ 12310 / JCM 11189 / NBRC 100395).